Consider the following 330-residue polypeptide: ADP-L-glycero-D-manno-heptose-6-epimerase (330 aa).

Residues 11–12 (FI), 32–33 (DN), Lys39, Lys54, 75–79 (EGACS), and Asn92 each bind NADP(+). Tyr139 serves as the catalytic Proton acceptor. An NADP(+)-binding site is contributed by Lys143. Asn168 contacts substrate. NADP(+)-binding residues include Val169 and Lys177. The Proton acceptor role is filled by Lys177. Substrate contacts are provided by residues Arg179, His186, 200-203 (FGEY), Arg213, and Tyr292.

It belongs to the NAD(P)-dependent epimerase/dehydratase family. HldD subfamily. Homopentamer. The cofactor is NADP(+).

It catalyses the reaction ADP-D-glycero-beta-D-manno-heptose = ADP-L-glycero-beta-D-manno-heptose. Its pathway is nucleotide-sugar biosynthesis; ADP-L-glycero-beta-D-manno-heptose biosynthesis; ADP-L-glycero-beta-D-manno-heptose from D-glycero-beta-D-manno-heptose 7-phosphate: step 4/4. Functionally, catalyzes the interconversion between ADP-D-glycero-beta-D-manno-heptose and ADP-L-glycero-beta-D-manno-heptose via an epimerization at carbon 6 of the heptose. This Burkholderia thailandensis (strain ATCC 700388 / DSM 13276 / CCUG 48851 / CIP 106301 / E264) protein is ADP-L-glycero-D-manno-heptose-6-epimerase.